The chain runs to 95 residues: Integration host factor subunit beta (95 aa).

The protein belongs to the bacterial histone-like protein family. Heterodimer of an alpha and a beta chain.

Functionally, this protein is one of the two subunits of integration host factor, a specific DNA-binding protein that functions in genetic recombination as well as in transcriptional and translational control. This Paracoccus denitrificans (strain Pd 1222) protein is Integration host factor subunit beta.